Consider the following 705-residue polypeptide: Probable glutamate carboxypeptidase AMP1 (705 aa).

Residues 1 to 24 (MSQPLTTRPTVTGISIIPFRQPPP) lie on the Cytoplasmic side of the membrane. Residues 25-42 (LCSFLFVIVLFVATFYTL) traverse the membrane as a helical; Signal-anchor for type II membrane protein segment. The Extracellular segment spans residues 43–705 (HHPDAVTPPL…ASKALKGGFT (663 aa)). Asparagine 74, asparagine 137, and asparagine 322 each carry an N-linked (GlcNAc...) asparagine glycan. Residues 255–548 (GVVGGEKLSL…GIWGLLGILL (294 aa)) are catalytic. Residues histidine 356 and aspartate 366 each contribute to the Zn(2+) site. Glutamate 403 (nucleophile) is an active-site residue. Zn(2+) contacts are provided by glutamate 404, aspartate 432, and histidine 514. Asparagine 676 carries N-linked (GlcNAc...) asparagine glycosylation.

Belongs to the peptidase M28 family. M28B subfamily. The cofactor is Zn(2+). Expressed in all plant parts. Highest levels in the bolt stem, inflorescence, root and silique. Low level in leaves.

The protein resides in the endoplasmic reticulum membrane. It catalyses the reaction Release of an unsubstituted, C-terminal glutamyl residue, typically from Ac-Asp-Glu or folylpoly-gamma-glutamates.. Its function is as follows. May modulate the level of one or more small signaling molecules that have a role in regulating meristem function. May play a role in balancing and restricting the meristem-promoting activity of auxin signaling. Involved in ethylene and giberellin (GA) signaling pathways or in a parallel pathway controlling cell and hypocotyl elongation and cellular organization. Involved in abscisic acid (ABA) signaling pathway. Plays a negative role in ABA-mediated seed germination and seedling development. Acts in association with LAMP1 to suppress ectopic stem cell niche formation in the shoot apical meristem (SAM) independently of cytokinin signaling pathway. Modulates responses to ABA, oxidative stress and abotic stress. Acts as a negative regulator of the ABA signaling pathway to modulate freezing and drought stress responses. Mediates carbon and amino acid metabolism. May be involved in the acquisition and/or maintenance of seed dormancy. Involved in the regulation of response to heat shock and plant defense. The protein is Probable glutamate carboxypeptidase AMP1 of Arabidopsis thaliana (Mouse-ear cress).